The following is a 215-amino-acid chain: Oligoribonuclease (215 aa).

An Exonuclease domain is found at 5 to 170 (LVWIDCEMTG…ADIHESIREL (166 aa)). Residue Y127 is part of the active site.

It belongs to the oligoribonuclease family.

Its subcellular location is the cytoplasm. In terms of biological role, 3'-to-5' exoribonuclease specific for small oligoribonucleotides. The sequence is that of Oligoribonuclease from Mycobacterium leprae (strain TN).